The primary structure comprises 569 residues: 4-coumarate--CoA ligase 2 (569 aa).

ATP is bound by residues Ser-219, Ser-220, Gly-221, Thr-222, Thr-223, and Lys-227. Positions 269 and 273 each coordinate (E)-4-coumaroyl-AMP. Arg-290 serves as a coordination point for CoA. The segment at 292–361 is SBD1; the sequence is EMGAMLGAIE…ARLPQAIFGQ (70 aa). Residues Ala-339, Gln-361, Gly-362, Thr-366, and Met-374 each contribute to the (E)-4-coumaroyl-AMP site. Gln-361, Gly-362, and Thr-366 together coordinate ATP. The segment at 362 to 429 is SBD2; it reads GYGMTEAGPV…IRGPQIMKGY (68 aa). ATP contacts are provided by Asp-450 and Arg-465. Residues Lys-467 and Lys-471 each contribute to the (E)-4-coumaroyl-AMP site. CoA is bound by residues Lys-473 and Gly-474. Residue Lys-556 participates in ATP binding.

It belongs to the ATP-dependent AMP-binding enzyme family. The cofactor is Mg(2+). In terms of tissue distribution, expressed in roots, stems, leaf blades, leaf sheaths and spikelets.

The enzyme catalyses (E)-ferulate + ATP + CoA = (E)-feruloyl-CoA + AMP + diphosphate. It catalyses the reaction (E)-4-coumarate + ATP + CoA = (E)-4-coumaroyl-CoA + AMP + diphosphate. It carries out the reaction (E)-caffeate + ATP + CoA = (E)-caffeoyl-CoA + AMP + diphosphate. The catalysed reaction is (E)-cinnamate + ATP + CoA = (E)-cinnamoyl-CoA + AMP + diphosphate. The enzyme catalyses (E)-ferulate + ATP + H(+) = (E)-feruloyl-AMP + diphosphate. It catalyses the reaction (E)-feruloyl-AMP + CoA = (E)-feruloyl-CoA + AMP + H(+). It carries out the reaction (E)-4-coumarate + ATP + H(+) = (E)-4-coumaroyl-AMP + diphosphate. The catalysed reaction is (E)-4-coumaroyl-AMP + CoA = (E)-4-coumaroyl-CoA + AMP + H(+). The enzyme catalyses (E)-caffeate + ATP + H(+) = (E)-caffeoyl-AMP + diphosphate. It catalyses the reaction (E)-caffeoyl-AMP + CoA = (E)-caffeoyl-CoA + AMP + H(+). It participates in phytoalexin biosynthesis; 3,4',5-trihydroxystilbene biosynthesis; 3,4',5-trihydroxystilbene from trans-4-coumarate: step 1/2. In terms of biological role, involved in the phenylpropanoid metabolism by mediating the activation of a number of hydroxycinnamates for the biosynthesis of monolignols and other phenolic secondary metabolites. Catalyzes the formation of CoA esters of cinnamate, 4-coumarate, caffeate and ferulate. Is more efficient with substrates in the following order: ferulate &gt; 4-coumarate &gt; caffeate &gt; cinnamate. Cannot convert sinapate to its corresponding CoA ester. Follows a two-step reaction mechanism, wherein the carboxylate substrate first undergoes adenylation by ATP, followed by a thioesterification in the presence of CoA to yield the final CoA thioester. This Oryza sativa subsp. japonica (Rice) protein is 4-coumarate--CoA ligase 2.